A 102-amino-acid polypeptide reads, in one-letter code: Cytochrome b (102 aa).

The next 3 membrane-spanning stretches (helical) occupy residues 1 to 21, 45 to 66, and 81 to 101; these read FGSL…FLAM, WLIR…YLHI, and WNIG…GYVL. Heme b contacts are provided by His-51 and His-65.

This sequence belongs to the cytochrome b family. In terms of assembly, the cytochrome bc1 complex contains 3 respiratory subunits (MT-CYB, CYC1 and UQCRFS1), 2 core proteins (UQCRC1 and UQCRC2) and probably 6 low-molecular weight proteins. It depends on heme b as a cofactor.

It is found in the mitochondrion inner membrane. Its function is as follows. Component of the ubiquinol-cytochrome c reductase complex (complex III or cytochrome b-c1 complex) that is part of the mitochondrial respiratory chain. The b-c1 complex mediates electron transfer from ubiquinol to cytochrome c. Contributes to the generation of a proton gradient across the mitochondrial membrane that is then used for ATP synthesis. This Megalops atlanticus (Tarpon) protein is Cytochrome b (mt-cyb).